We begin with the raw amino-acid sequence, 248 residues long: Ubiquinone biosynthesis O-methyltransferase (248 aa).

S-adenosyl-L-methionine contacts are provided by R41, G72, D93, and M136.

The protein belongs to the methyltransferase superfamily. UbiG/COQ3 family.

It carries out the reaction a 3-demethylubiquinol + S-adenosyl-L-methionine = a ubiquinol + S-adenosyl-L-homocysteine + H(+). The enzyme catalyses a 3-(all-trans-polyprenyl)benzene-1,2-diol + S-adenosyl-L-methionine = a 2-methoxy-6-(all-trans-polyprenyl)phenol + S-adenosyl-L-homocysteine + H(+). It participates in cofactor biosynthesis; ubiquinone biosynthesis. Its function is as follows. O-methyltransferase that catalyzes the 2 O-methylation steps in the ubiquinone biosynthetic pathway. The chain is Ubiquinone biosynthesis O-methyltransferase from Sinorhizobium fredii (strain NBRC 101917 / NGR234).